A 411-amino-acid polypeptide reads, in one-letter code: Arginine deiminase (411 aa).

The active-site Amidino-cysteine intermediate is the C401.

Belongs to the arginine deiminase family.

The protein localises to the cytoplasm. The catalysed reaction is L-arginine + H2O = L-citrulline + NH4(+). It participates in amino-acid degradation; L-arginine degradation via ADI pathway; carbamoyl phosphate from L-arginine: step 1/2. The sequence is that of Arginine deiminase from Streptococcus equi subsp. equi (strain 4047).